We begin with the raw amino-acid sequence, 358 residues long: Probable branched-chain-amino-acid aminotransferase (358 aa).

Lysine 196 carries the N6-(pyridoxal phosphate)lysine modification.

The protein belongs to the class-IV pyridoxal-phosphate-dependent aminotransferase family. Requires pyridoxal 5'-phosphate as cofactor.

The enzyme catalyses L-leucine + 2-oxoglutarate = 4-methyl-2-oxopentanoate + L-glutamate. The catalysed reaction is L-isoleucine + 2-oxoglutarate = (S)-3-methyl-2-oxopentanoate + L-glutamate. It catalyses the reaction L-valine + 2-oxoglutarate = 3-methyl-2-oxobutanoate + L-glutamate. The protein operates within amino-acid biosynthesis; L-isoleucine biosynthesis; L-isoleucine from 2-oxobutanoate: step 4/4. It participates in amino-acid biosynthesis; L-leucine biosynthesis; L-leucine from 3-methyl-2-oxobutanoate: step 4/4. It functions in the pathway amino-acid biosynthesis; L-valine biosynthesis; L-valine from pyruvate: step 4/4. In terms of biological role, acts on leucine, isoleucine and valine. The sequence is that of Probable branched-chain-amino-acid aminotransferase (ilvE) from Staphylococcus aureus (strain MRSA252).